A 152-amino-acid chain; its full sequence is Large ribosomal subunit protein bL9 (152 aa).

The protein belongs to the bacterial ribosomal protein bL9 family.

Its function is as follows. Binds to the 23S rRNA. The sequence is that of Large ribosomal subunit protein bL9 from Mycobacterium bovis (strain ATCC BAA-935 / AF2122/97).